The sequence spans 137 residues: Large ribosomal subunit protein uL16 (137 aa).

The protein belongs to the universal ribosomal protein uL16 family. Part of the 50S ribosomal subunit.

Binds 23S rRNA and is also seen to make contacts with the A and possibly P site tRNAs. This is Large ribosomal subunit protein uL16 from Endomicrobium trichonymphae.